The primary structure comprises 783 residues: Outer membrane usher protein FanD (783 aa).

Residues 1 to 23 form the signal peptide; it reads MNRKKHQILKILLLCLISSKSSA. Cys763 and Cys782 are joined by a disulfide.

The protein belongs to the fimbrial export usher family.

The protein resides in the cell outer membrane. Functionally, involved in the export and assembly of K99 fimbrial subunits across the outer membrane. This Escherichia coli protein is Outer membrane usher protein FanD (fanD).